The primary structure comprises 281 residues: 4-diphosphocytidyl-2-C-methyl-D-erythritol kinase (281 aa).

Lys-11 is a catalytic residue. Pro-95–Ser-105 contributes to the ATP binding site. Asp-137 is an active-site residue.

Belongs to the GHMP kinase family. IspE subfamily.

It catalyses the reaction 4-CDP-2-C-methyl-D-erythritol + ATP = 4-CDP-2-C-methyl-D-erythritol 2-phosphate + ADP + H(+). It participates in isoprenoid biosynthesis; isopentenyl diphosphate biosynthesis via DXP pathway; isopentenyl diphosphate from 1-deoxy-D-xylulose 5-phosphate: step 3/6. Functionally, catalyzes the phosphorylation of the position 2 hydroxy group of 4-diphosphocytidyl-2C-methyl-D-erythritol. The polypeptide is 4-diphosphocytidyl-2-C-methyl-D-erythritol kinase (Geobacter metallireducens (strain ATCC 53774 / DSM 7210 / GS-15)).